A 677-amino-acid polypeptide reads, in one-letter code: Amine oxidase [copper-containing] alpha 2, peroxisomal (677 aa).

320–331 (YLDCGEFGCGQT) is a substrate binding site. Asp322 (proton acceptor) is an active-site residue. Cys341 and Cys367 are disulfide-bonded. 407-412 (VGNYDY) is a substrate binding site. Tyr410 acts as the Schiff-base intermediate with substrate; via topaquinone in catalysis. Tyr410 bears the 2',4',5'-topaquinone mark. The Cu cation site is built by His466 and His468. Asp477, Asp617, and Ile618 together coordinate Mn(2+). His628 contacts Cu cation.

This sequence belongs to the copper/topaquinone oxidase family. In terms of assembly, homodimer. Cu cation serves as cofactor. Zn(2+) is required as a cofactor. Requires L-topaquinone as cofactor. Post-translationally, topaquinone (TPQ) is generated by copper-dependent autoxidation of a specific tyrosyl residue. As to expression, expressed exclusively in leaves.

It is found in the peroxisome. It catalyses the reaction a primary methyl amine + O2 + H2O = an aldehyde + H2O2 + NH4(+). The protein operates within amine and polyamine degradation; putrescine degradation. In terms of biological role, copper amine oxidase that can use putrescine and spermidine as substrates. Involved in putrescine catabolism in peroxisomes in response to salt stress. Regulates arginine-dependent nitric oxide (NO) production, a key signaling molecule regulating a wide range of physiological processes including responses to salt stress, by influencing arginine bioavailability. Modulates primary root growth. This is Amine oxidase [copper-containing] alpha 2, peroxisomal from Arabidopsis thaliana (Mouse-ear cress).